We begin with the raw amino-acid sequence, 116 residues long: Large ribosomal subunit protein bL17 (116 aa).

This sequence belongs to the bacterial ribosomal protein bL17 family. In terms of assembly, part of the 50S ribosomal subunit. Contacts protein L32.

The sequence is that of Large ribosomal subunit protein bL17 from Crocosphaera subtropica (strain ATCC 51142 / BH68) (Cyanothece sp. (strain ATCC 51142)).